The primary structure comprises 495 residues: Probable cytosol aminopeptidase (495 aa).

The Mn(2+) site is built by Lys261 and Asp266. Residue Lys273 is part of the active site. Mn(2+) contacts are provided by Asp284, Asp343, and Glu345. Residue Arg347 is part of the active site.

This sequence belongs to the peptidase M17 family. Mn(2+) serves as cofactor.

It localises to the cytoplasm. The enzyme catalyses Release of an N-terminal amino acid, Xaa-|-Yaa-, in which Xaa is preferably Leu, but may be other amino acids including Pro although not Arg or Lys, and Yaa may be Pro. Amino acid amides and methyl esters are also readily hydrolyzed, but rates on arylamides are exceedingly low.. It carries out the reaction Release of an N-terminal amino acid, preferentially leucine, but not glutamic or aspartic acids.. In terms of biological role, presumably involved in the processing and regular turnover of intracellular proteins. Catalyzes the removal of unsubstituted N-terminal amino acids from various peptides. This chain is Probable cytosol aminopeptidase, found in Chelativorans sp. (strain BNC1).